A 160-amino-acid chain; its full sequence is 3-hydroxyacyl-[acyl-carrier-protein] dehydratase FabZ (160 aa).

H58 is a catalytic residue.

The protein belongs to the thioester dehydratase family. FabZ subfamily.

The protein localises to the cytoplasm. The enzyme catalyses a (3R)-hydroxyacyl-[ACP] = a (2E)-enoyl-[ACP] + H2O. Functionally, involved in unsaturated fatty acids biosynthesis. Catalyzes the dehydration of short chain beta-hydroxyacyl-ACPs and long chain saturated and unsaturated beta-hydroxyacyl-ACPs. This is 3-hydroxyacyl-[acyl-carrier-protein] dehydratase FabZ from Ruegeria sp. (strain TM1040) (Silicibacter sp.).